We begin with the raw amino-acid sequence, 709 residues long: Polyribonucleotide nucleotidyltransferase (709 aa).

Residues D491 and D497 each contribute to the Mg(2+) site. One can recognise a KH domain in the interval 557 to 617; the sequence is PKSESFMIPP…ENLQKAKTFI (61 aa). The 69-residue stretch at 641–709 folds into the S1 motif domain; sequence GERFVGKIKK…KNKVELGLVE (69 aa).

This sequence belongs to the polyribonucleotide nucleotidyltransferase family. Mg(2+) serves as cofactor.

The protein localises to the cytoplasm. The catalysed reaction is RNA(n+1) + phosphate = RNA(n) + a ribonucleoside 5'-diphosphate. Functionally, involved in mRNA degradation. Catalyzes the phosphorolysis of single-stranded polyribonucleotides processively in the 3'- to 5'-direction. This is Polyribonucleotide nucleotidyltransferase from Helicobacter hepaticus (strain ATCC 51449 / 3B1).